A 184-amino-acid polypeptide reads, in one-letter code: Bacterial microcompartment shell protein PduT (184 aa).

2 BMC domains span residues 4–86 and 96–182; these read AIGI…PAIS and AVGI…RQMV. [4Fe-4S] cluster is bound at residue C38.

It belongs to the bacterial microcompartments protein family. As to quaternary structure, homotrimerizes to form a pseudohexamer with a large central pore, which is probably the binding site for the [4Fe-4S] center. Interacts with PduS. Originally suggested to be a homotetramer; this is incorrect. [4Fe-4S] cluster serves as cofactor.

The protein resides in the bacterial microcompartment. Its pathway is polyol metabolism; 1,2-propanediol degradation. Functionally, a minor shell protein of the bacterial microcompartment (BMC) dedicated to 1,2-propanediol (1,2-PD) degradation. Overexpression of this protein leads to cells with either deposits or having lamina-like structures in the cytoplasm. Not absolutely required to make artificial BMCs. May selectively transport specific metabolites. Its function is as follows. Expression of a cosmid containing the full 21-gene pdu operon in E.coli allows E.coli to grow on 1,2-propanediol (1,2-PD) with the appearance of bacterial microcompartments (BMC) in its cytoplasm. In terms of biological role, the 1,2-PD-specific bacterial microcompartment (BMC) concentrates low levels of 1,2-PD catabolic enzymes, concentrates volatile reaction intermediates thus enhancing pathway flux and keeps the level of toxic, mutagenic propionaldehyde low. The sequence is that of Bacterial microcompartment shell protein PduT from Citrobacter freundii.